A 238-amino-acid chain; its full sequence is MSSIALGVNIDHIATLRNARNTEYPDLVEIANIAVNNGADFITVHLREDRRHIRDSDVFRLKDNLNVPLNLEIAAIDEMLAIAIAVQPECVCLVPEKRQELTTEGGLDVKNMFTYLMPFVTQLHNHNIKVTLFVEPDINQINYAKKLSVDNIELHTGVYCNHNTQNELNRILEAAKHCYTNKIECHAGHGLDYQSAATIARVPYISALNIGHFLICEAVLHGIGTSIYKMKKVITNPL.

Residue N9 participates in 3-amino-2-oxopropyl phosphate binding. A 1-deoxy-D-xylulose 5-phosphate-binding site is contributed by 11-12 (DH). R20 is a 3-amino-2-oxopropyl phosphate binding site. Residue H45 is the Proton acceptor of the active site. 1-deoxy-D-xylulose 5-phosphate is bound by residues R47 and H52. E72 (proton acceptor) is an active-site residue. T102 is a binding site for 1-deoxy-D-xylulose 5-phosphate. H189 functions as the Proton donor in the catalytic mechanism. 3-amino-2-oxopropyl phosphate contacts are provided by residues G190 and 211–212 (GH).

Belongs to the PNP synthase family. Homooctamer; tetramer of dimers.

Its subcellular location is the cytoplasm. It carries out the reaction 3-amino-2-oxopropyl phosphate + 1-deoxy-D-xylulose 5-phosphate = pyridoxine 5'-phosphate + phosphate + 2 H2O + H(+). Its pathway is cofactor biosynthesis; pyridoxine 5'-phosphate biosynthesis; pyridoxine 5'-phosphate from D-erythrose 4-phosphate: step 5/5. Its function is as follows. Catalyzes the complicated ring closure reaction between the two acyclic compounds 1-deoxy-D-xylulose-5-phosphate (DXP) and 3-amino-2-oxopropyl phosphate (1-amino-acetone-3-phosphate or AAP) to form pyridoxine 5'-phosphate (PNP) and inorganic phosphate. In Ehrlichia ruminantium (strain Gardel), this protein is Pyridoxine 5'-phosphate synthase.